The chain runs to 330 residues: ADP-L-glycero-D-manno-heptose-6-epimerase (330 aa).

NADP(+) contacts are provided by residues 11 to 12 (FI), 32 to 33 (DN), Lys39, Lys54, 75 to 79 (EGACS), and Asn92. Residue Tyr139 is the Proton acceptor of the active site. Residue Lys143 coordinates NADP(+). Substrate is bound at residue Asn168. Residues Val169 and Lys177 each contribute to the NADP(+) site. Lys177 (proton acceptor) is an active-site residue. Residues Arg179, His186, 200 to 203 (FGEY), Arg213, and Tyr292 contribute to the substrate site.

It belongs to the NAD(P)-dependent epimerase/dehydratase family. HldD subfamily. In terms of assembly, homopentamer. Requires NADP(+) as cofactor.

It carries out the reaction ADP-D-glycero-beta-D-manno-heptose = ADP-L-glycero-beta-D-manno-heptose. It functions in the pathway nucleotide-sugar biosynthesis; ADP-L-glycero-beta-D-manno-heptose biosynthesis; ADP-L-glycero-beta-D-manno-heptose from D-glycero-beta-D-manno-heptose 7-phosphate: step 4/4. Its function is as follows. Catalyzes the interconversion between ADP-D-glycero-beta-D-manno-heptose and ADP-L-glycero-beta-D-manno-heptose via an epimerization at carbon 6 of the heptose. In Burkholderia vietnamiensis (strain G4 / LMG 22486) (Burkholderia cepacia (strain R1808)), this protein is ADP-L-glycero-D-manno-heptose-6-epimerase.